The following is a 405-amino-acid chain: MSASPIADYHAFPDAQGHFGRYGGSFVAETLVGPLQELAQAYDQARQDPAFQAAYDRDLAHYVGRPSPIYHAQRLSDHVGGAQILLKREDLNHTGAHKINNTIGQALLAARMGKKRIIAETGAGQHGVASATVAARLGLECVVYMGATDIERQKINVYRMKLLGATVVPVTSGSATLKDALNEAMRDWVTNVQDTFYIIGTVAGPDPYPRMVRDFNAIVGREAREQMLAEYGRLPDAITACVGGGSNAIGLFHAFLNDRQVEIVGAEAAGDGIHTGRHAASIAAGRPGVLHGNRTYVLCDDDGQIIETHSVSAGLDYPGVGPEHAFLADSGRARYLGITDEEALQAFHLLAHTEGILPALESSHALAQAMKLARERPRDQIVLCNLSGRGDKDVHTIAAREGLVL.

Lys98 carries the post-translational modification N6-(pyridoxal phosphate)lysine.

The protein belongs to the TrpB family. As to quaternary structure, tetramer of two alpha and two beta chains. Pyridoxal 5'-phosphate serves as cofactor.

It catalyses the reaction (1S,2R)-1-C-(indol-3-yl)glycerol 3-phosphate + L-serine = D-glyceraldehyde 3-phosphate + L-tryptophan + H2O. It participates in amino-acid biosynthesis; L-tryptophan biosynthesis; L-tryptophan from chorismate: step 5/5. In terms of biological role, the beta subunit is responsible for the synthesis of L-tryptophan from indole and L-serine. This chain is Tryptophan synthase beta chain, found in Stenotrophomonas maltophilia (strain R551-3).